The chain runs to 270 residues: Homeobox protein Hox-D12 (270 aa).

Residues 102-122 are disordered; sequence APEAAAGPEERGRTRPSFAPE. The homeobox DNA-binding region spans 202–261; sequence ARKKRKPYTKQQIAELENEFLVNEFINRQKRKELSNRLNLSDQQVKIWFQNRRMKKKRVV.

This sequence belongs to the Abd-B homeobox family.

Its subcellular location is the nucleus. Its function is as follows. Sequence-specific transcription factor which is part of a developmental regulatory system that provides cells with specific positional identities on the anterior-posterior axis. The polypeptide is Homeobox protein Hox-D12 (HOXD12) (Homo sapiens (Human)).